A 911-amino-acid polypeptide reads, in one-letter code: Pesticidal crystal protein Cry1Af (911 aa).

Belongs to the delta endotoxin family.

In terms of biological role, promotes colloidosmotic lysis by binding to the midgut epithelial cells of both dipteran and lepidopteran larvae. The sequence is that of Pesticidal crystal protein Cry1Af (cry1Af) from Bacillus thuringiensis.